The chain runs to 352 residues: Fe(3+) ions import ATP-binding protein FbpC (352 aa).

One can recognise an ABC transporter domain in the interval 5–239 (LHIGHLSKSF…PADLDAALFI (235 aa)). Residue 37 to 44 (GASGCGKT) participates in ATP binding.

This sequence belongs to the ABC transporter superfamily. Fe(3+) ion importer (TC 3.A.1.10) family. In terms of assembly, the complex is composed of two ATP-binding proteins (FbpC), two transmembrane proteins (FbpB) and a solute-binding protein (FbpA).

It is found in the cell inner membrane. It catalyses the reaction Fe(3+)(out) + ATP + H2O = Fe(3+)(in) + ADP + phosphate + H(+). In terms of biological role, part of the ABC transporter complex FbpABC involved in Fe(3+) ions import. Responsible for energy coupling to the transport system. The sequence is that of Fe(3+) ions import ATP-binding protein FbpC from Neisseria gonorrhoeae (strain ATCC 700825 / FA 1090).